The sequence spans 194 residues: Peptidyl-tRNA hydrolase (194 aa).

Position 16 (Tyr-16) interacts with tRNA. The active-site Proton acceptor is the His-21. TRNA contacts are provided by Phe-67, Asn-69, and Asn-115.

This sequence belongs to the PTH family. In terms of assembly, monomer.

It localises to the cytoplasm. It catalyses the reaction an N-acyl-L-alpha-aminoacyl-tRNA + H2O = an N-acyl-L-amino acid + a tRNA + H(+). In terms of biological role, hydrolyzes ribosome-free peptidyl-tRNAs (with 1 or more amino acids incorporated), which drop off the ribosome during protein synthesis, or as a result of ribosome stalling. Catalyzes the release of premature peptidyl moieties from peptidyl-tRNA molecules trapped in stalled 50S ribosomal subunits, and thus maintains levels of free tRNAs and 50S ribosomes. This Shigella boydii serotype 4 (strain Sb227) protein is Peptidyl-tRNA hydrolase.